The primary structure comprises 73 residues: Large ribosomal subunit protein bL28 (73 aa).

The protein belongs to the bacterial ribosomal protein bL28 family.

This chain is Large ribosomal subunit protein bL28, found in Anaeromyxobacter sp. (strain Fw109-5).